Consider the following 483-residue polypeptide: Acetyltransferase AOL_s00215g273 (483 aa).

8 helical membrane passes run 9-29, 33-53, 141-161, 191-211, 292-312, 334-354, 372-392, and 453-473; these read ALIGVTVIPTLILSLPTTSFV, IYPLPALLVLRALLWPPTEGL, VAYIFESMVSILSIYLGLYTC, IFQMVVAFMGIFAMVSNSVLV, FLVFSAFGVSGLLHSLAVYYG, VTGYFFYIQPFAITLEDFICW, WFVGMVYTLTWFTWGTAVLWI, and LGGYLYLYAYTTLEILGGSGF.

Belongs to the wax synthase family.

It localises to the membrane. Its pathway is secondary metabolite biosynthesis; terpenoid biosynthesis. In terms of biological role, acetyltransferase; part of the gene cluster that mediates the biosynthesis of sesquiterpenyl epoxy-cyclohexenoids (SECs) such as anthrobotrisins and arthrosporols, metabolites that possess a novel hybrid carbon skeleton consisting of a polyketide-derived epoxycyclohexenol combined with a terpenoid-derived monocyclic sesquiterpenol substructure (PKS-PTS hybrid). The SEC pathway plays an important role for fungal soil colonization via decreasing fungal nematode-capturing ability. The role of the acetyltransferase in SEC biosynthesis has still to be determined. The pathway begins with the biosynthesis of 6-methylsalicylic acid (6-MSA), the first precursor of the polyketide-derived epoxycyclohexenol in arthrosporols, by the polyketide synthase (PKS) AOL_s00215g283 via condensation of 1 acetate and 3 malonate units. The 6-methylsalicylic acid decarboxylase AOL_s00215g281 then catalyzes the decarboxylation of 6-methylsalicylic acid to yield m-cresol. The cytochrome P450 monooxygenase AOL_s00215g282 further oxidizes m-cresol to yield toluquinol. With the assistance of the oxidoreductase AOL_s00215g277, the polyprenyl transferase AOL_s00215g276 catalyzes the farnesylation of toluquinol to produce farnesyl hydroquinone, the hybrid precursor for biosynthesis of SECs. Farnesyl hydroquinone undergoes epoxidation and then subsequent dehydrogenation to form farnesyl epoxy-quinone, the first and simplest SEC. The cytochrome P450 monooxygenase AOL_s00215g278 and the FAD-dependent monooxygenase AOL_s00215g279 might be involved in the oxygenation of the phenol moiety, most likely in the epoxy formation. The cytochrome P450 monooxygenases AOL_s00215g274 and AOL_s00215g280 are involved in specific regional ketone reductions at respectively C-4 and C-1 of farnesyl epoxy-quinone PubMed:33823587. This chain is Acetyltransferase AOL_s00215g273, found in Arthrobotrys oligospora (strain ATCC 24927 / CBS 115.81 / DSM 1491) (Nematode-trapping fungus).